The chain runs to 410 residues: MKEEIIERFTTYVKVDTQSDESVDTCPSTPGQLTLGNMLVDELKSIGMQDAAIDENGYVMATLPSNTEKDVPTIGFLAHVDTATDFTGKNVNPQIIESYDGKDIVLNEQLQVTLSPDQFPELSGYKGHTLITTDGTTLLGADNKAGIAEIMTAMDYLIKHPEIKHGTIRVAFTPDEEIGRGPHKFDVKRFNASFAYTVDGGPLGELEYESFNAAAAKITIKGNNVHPGTAKGKMINSAKIAMKLNSLLPADEAPEYTEGYEGFYHLLSIQGDVEETKLHYIIRDFDKENFQNRKETMKRAVEELQNEYGQDRILLDMNDQYYNMREKIEPVIEIVNIAKQAMENLGIEPKISPIRGGTDGSQLSYMGLPTPNIFTGGENFHGKFEYISVDNMVKAVNVIVEIAKQFEAQA.

Residue His-79 participates in Zn(2+) binding. Residue Asp-81 is part of the active site. Asp-142 contributes to the Zn(2+) binding site. Glu-176 functions as the Proton acceptor in the catalytic mechanism. Zn(2+)-binding residues include Glu-177, Asp-199, and His-381.

The protein belongs to the peptidase M20B family. It depends on Zn(2+) as a cofactor.

It localises to the cytoplasm. The catalysed reaction is Release of the N-terminal residue from a tripeptide.. In terms of biological role, cleaves the N-terminal amino acid of tripeptides. In Bacillus subtilis (strain 168), this protein is Peptidase T (pepT).